A 329-amino-acid chain; its full sequence is Transmembrane protein I329L (329 aa).

Residues 1-31 (MLRVFIFFVFLGSGLAGKVKSPITCKYFISK) form the signal peptide. N-linked (GlcNAc...) asparagine; by host glycans are attached at residues Asn32, Asn39, Asn44, Asn58, Asn76, Asn82, Asn101, Asn185, and Asn219. Residues 32-239 (NNTWYKYNVT…NTERYKNCYP (208 aa)) are Extracellular-facing. The helical transmembrane segment at 240-260 (FVLVSIICSCISSLFLLICLL) threads the bilayer. Topologically, residues 261 to 329 (RTICKKYSCT…EKKVSCSRRK (69 aa)) are cytoplasmic.

This sequence belongs to the asfivirus I329L family. Post-translationally, highly glycosylated.

It is found in the host endoplasmic reticulum membrane. It localises to the host Golgi apparatus membrane. Viral TLR3 homolog that probably prevents TLR3 dimerization and subsequent induction of IFN. Inhibits dsRNA-stimulated activation of NF-kB and IRF3. This chain is Transmembrane protein I329L, found in Ornithodoros (relapsing fever ticks).